A 133-amino-acid polypeptide reads, in one-letter code: MADAFAGTWKLVDSKNFDDYMKSIGVGFATRQVASMTKPTTIIEINGDTIILKTQSTFKNTEISFKLGVELDKTTADDRKVKSTVTLDGGKLVHVQKWDGQETKLVRELVDGKLILTLTHNNVVCTRTYEKEA.

Ala2 bears the N-acetylalanine mark. Thr8 is modified (phosphothreonine). Phosphotyrosine; by Tyr-kinases is present on Tyr20. The residue at position 23 (Ser23) is a Phosphoserine. At Thr30 the chain carries Phosphothreonine. Phosphoserine is present on Ser83. 127–129 (RTY) is a binding site for (9Z)-octadecenoate. Hexadecanoate is bound at residue 127–129 (RTY). An octadecanoate-binding site is contributed by 127 to 129 (RTY).

The protein belongs to the calycin superfamily. Fatty-acid binding protein (FABP) family.

Its subcellular location is the cytoplasm. Functionally, FABPs are thought to play a role in the intracellular transport of long-chain fatty acids and their acyl-CoA esters. FABPs are important elements related to the hibernating state in mammals. This Myotis lucifugus (Little brown bat) protein is Fatty acid-binding protein, heart (FABP3).